We begin with the raw amino-acid sequence, 132 residues long: Small ribosomal subunit protein uS8 (132 aa).

This sequence belongs to the universal ribosomal protein uS8 family. As to quaternary structure, part of the 30S ribosomal subunit. Contacts proteins S5 and S12.

Its function is as follows. One of the primary rRNA binding proteins, it binds directly to 16S rRNA central domain where it helps coordinate assembly of the platform of the 30S subunit. The polypeptide is Small ribosomal subunit protein uS8 (Streptomyces coelicolor (strain ATCC BAA-471 / A3(2) / M145)).